We begin with the raw amino-acid sequence, 227 residues long: Ribose-5-phosphate isomerase A (227 aa).

Residues 28–31, 81–84, and 94–97 contribute to the substrate site; these read TGST, DGAD, and KGGG. Glutamate 103 (proton acceptor) is an active-site residue. Substrate is bound at residue lysine 121.

It belongs to the ribose 5-phosphate isomerase family. In terms of assembly, homodimer.

The enzyme catalyses aldehydo-D-ribose 5-phosphate = D-ribulose 5-phosphate. It participates in carbohydrate degradation; pentose phosphate pathway; D-ribose 5-phosphate from D-ribulose 5-phosphate (non-oxidative stage): step 1/1. Functionally, catalyzes the reversible conversion of ribose-5-phosphate to ribulose 5-phosphate. This chain is Ribose-5-phosphate isomerase A, found in Caulobacter vibrioides (strain ATCC 19089 / CIP 103742 / CB 15) (Caulobacter crescentus).